Here is a 154-residue protein sequence, read N- to C-terminus: Interleukin-2 (154 aa).

The first 20 residues, Met1–Ser20, serve as a signal peptide directing secretion. The O-linked (GalNAc...) threonine glycan is linked to Thr23. The cysteines at positions 78 and 126 are disulfide-linked.

This sequence belongs to the IL-2 family.

The protein localises to the secreted. In terms of biological role, cytokine produced by activated CD4-positive helper T-cells and to a lesser extend activated CD8-positive T-cells and natural killer (NK) cells that plays pivotal roles in the immune response and tolerance. Binds to a receptor complex composed of either the high-affinity trimeric IL-2R (IL2RA/CD25, IL2RB/CD122 and IL2RG/CD132) or the low-affinity dimeric IL-2R (IL2RB and IL2RG). Interaction with the receptor leads to oligomerization and conformation changes in the IL-2R subunits resulting in downstream signaling starting with phosphorylation of JAK1 and JAK3. In turn, JAK1 and JAK3 phosphorylate the receptor to form a docking site leading to the phosphorylation of several substrates including STAT5. This process leads to activation of several pathways including STAT, phosphoinositide-3-kinase/PI3K and mitogen-activated protein kinase/MAPK pathways. Functions as a T-cell growth factor and can increase NK-cell cytolytic activity as well. Promotes strong proliferation of activated B-cells and subsequently immunoglobulin production. Plays a pivotal role in regulating the adaptive immune system by controlling the survival and proliferation of regulatory T-cells, which are required for the maintenance of immune tolerance. Moreover, participates in the differentiation and homeostasis of effector T-cell subsets, including Th1, Th2, Th17 as well as memory CD8-positive T-cells. This is Interleukin-2 (IL2) from Saimiri sciureus (Common squirrel monkey).